A 449-amino-acid polypeptide reads, in one-letter code: Tubulin alpha-1C chain (449 aa).

An MREC motif motif is present at residues 1 to 4 (MREC). A GTP-binding site is contributed by Q11. An N6-acetyllysine modification is found at K40. 7 residues coordinate GTP: E71, S140, G144, T145, T179, N206, and N228. A Mg(2+)-binding site is contributed by E71. E254 is an active-site residue. Y282 is subject to 3'-nitrotyrosine. At Y432 the chain carries Phosphotyrosine. S439 is subject to Phosphoserine. Y449 bears the 3'-nitrotyrosine mark.

This sequence belongs to the tubulin family. Dimer of alpha and beta chains. A typical microtubule is a hollow water-filled tube with an outer diameter of 25 nm and an inner diameter of 15 nM. Alpha-beta heterodimers associate head-to-tail to form protofilaments running lengthwise along the microtubule wall with the beta-tubulin subunit facing the microtubule plus end conferring a structural polarity. Microtubules usually have 13 protofilaments but different protofilament numbers can be found in some organisms and specialized cells. It depends on Mg(2+) as a cofactor. Some glutamate residues at the C-terminus are polyglycylated, resulting in polyglycine chains on the gamma-carboxyl group. Glycylation is mainly limited to tubulin incorporated into axonemes (cilia and flagella) whereas glutamylation is prevalent in neuronal cells, centrioles, axonemes, and the mitotic spindle. Both modifications can coexist on the same protein on adjacent residues, and lowering polyglycylation levels increases polyglutamylation, and reciprocally. Cilia and flagella glycylation is required for their stability and maintenance. Flagella glycylation controls sperm motility. In terms of processing, some glutamate residues at the C-terminus are polyglutamylated, resulting in polyglutamate chains on the gamma-carboxyl group. Polyglutamylation plays a key role in microtubule severing by spastin (SPAST). SPAST preferentially recognizes and acts on microtubules decorated with short polyglutamate tails: severing activity by SPAST increases as the number of glutamates per tubulin rises from one to eight, but decreases beyond this glutamylation threshold. Glutamylation is also involved in cilia motility. Post-translationally, acetylation of alpha chains at Lys-40 is located inside the microtubule lumen. This modification has been correlated with increased microtubule stability, intracellular transport and ciliary assembly. Methylation of alpha chains at Lys-40 is found in mitotic microtubules and is required for normal mitosis and cytokinesis contributing to genomic stability. In terms of processing, nitration of Tyr-449 is irreversible and interferes with normal dynein intracellular distribution. Post-translationally, undergoes a tyrosination/detyrosination cycle, the cyclic removal and re-addition of a C-terminal tyrosine residue by the enzymes tubulin tyrosine carboxypeptidase (MATCAP1, VASH1 or VASH2) and tubulin tyrosine ligase (TTL), respectively. Tyrosination promotes microtubule interaction with CAP-Gly domain-containing proteins such as CLIP1, CLIP2 and DCTN1. Tyrosination regulates the initiation of dynein-dynactin motility via interaction with DCTN1, which brings the dynein-dynactin complex into contact with microtubules. In neurons, tyrosinated tubulins mediate the initiation of retrograde vesicle transport. In terms of processing, detyrosination is involved in metaphase plate congression by guiding chromosomes during mitosis: detyrosination promotes interaction with CENPE, promoting pole-proximal transport of chromosomes toward the equator. Detyrosination increases microtubules-dependent mechanotransduction in dystrophic cardiac and skeletal muscle. In cardiomyocytes, detyrosinated microtubules are required to resist to contractile compression during contraction: detyrosination promotes association with desmin (DES) at force-generating sarcomeres, leading to buckled microtubules and mechanical resistance to contraction. As to expression, minor alpha-tubulin expressed in all tissues.

Its subcellular location is the cytoplasm. It is found in the cytoskeleton. The enzyme catalyses GTP + H2O = GDP + phosphate + H(+). Tubulin is the major constituent of microtubules, a cylinder consisting of laterally associated linear protofilaments composed of alpha- and beta-tubulin heterodimers. Microtubules grow by the addition of GTP-tubulin dimers to the microtubule end, where a stabilizing cap forms. Below the cap, tubulin dimers are in GDP-bound state, owing to GTPase activity of alpha-tubulin. The chain is Tubulin alpha-1C chain (Tuba1c) from Mus musculus (Mouse).